The chain runs to 465 residues: MHEGKITQIIGPVVDVDFVDGQLPSIMDALIVERPDGTELVLETQQHLGEERVRTIAMEATEGLVRGMKVVNTKNPIQTPVGENVLGRMLNVVGKPIDGLGEVHATKTYSIHRPSPAFDELSTKAEMFETGIKVIDLLEPYSRGGKTGLFGGAGVGKTVLIMELINNIAKQQSGYSVFAGVGERTREGNDLWEEMKESGVIDKTALVFGQMNEPPGARARVALTALSIAEYFRDEENRDVLLFVDNIFRFTQAGSEVSALLGRMPSAVGYQPTLATEMGALQERIVSTKKGSITSVQAIYVPADDLTDPAPATTFTHLDATTVLSRSIAELGIYPAVDPLDSTSRILDPNIIGRDHYDTAQAVKQILQRYKDLQDIIAILGMDELSDEDKLLVARARKVQRFLSQPFFVAEQFTGLEGKYVRLEDTIKAFKEIIEGRHDSLPENAFYLVGTIEDAIKKAKQLQNA.

151 to 158 contributes to the ATP binding site; the sequence is GGAGVGKT.

It belongs to the ATPase alpha/beta chains family. In terms of assembly, F-type ATPases have 2 components, CF(1) - the catalytic core - and CF(0) - the membrane proton channel. CF(1) has five subunits: alpha(3), beta(3), gamma(1), delta(1), epsilon(1). CF(0) has four main subunits: a(1), b(1), b'(1) and c(9-12).

It localises to the cell inner membrane. The catalysed reaction is ATP + H2O + 4 H(+)(in) = ADP + phosphate + 5 H(+)(out). Produces ATP from ADP in the presence of a proton gradient across the membrane. The catalytic sites are hosted primarily by the beta subunits. The polypeptide is ATP synthase subunit beta (Chloroherpeton thalassium (strain ATCC 35110 / GB-78)).